Reading from the N-terminus, the 142-residue chain is Large ribosomal subunit protein uL11 (142 aa).

The protein belongs to the universal ribosomal protein uL11 family. As to quaternary structure, part of the ribosomal stalk of the 50S ribosomal subunit. Interacts with L10 and the large rRNA to form the base of the stalk. L10 forms an elongated spine to which L12 dimers bind in a sequential fashion forming a multimeric L10(L12)X complex. In terms of processing, one or more lysine residues are methylated.

Forms part of the ribosomal stalk which helps the ribosome interact with GTP-bound translation factors. The polypeptide is Large ribosomal subunit protein uL11 (Methylocella silvestris (strain DSM 15510 / CIP 108128 / LMG 27833 / NCIMB 13906 / BL2)).